The chain runs to 244 residues: 5-oxoprolinase subunit A (244 aa).

This sequence belongs to the LamB/PxpA family. In terms of assembly, forms a complex composed of PxpA, PxpB and PxpC.

It catalyses the reaction 5-oxo-L-proline + ATP + 2 H2O = L-glutamate + ADP + phosphate + H(+). Its function is as follows. Catalyzes the cleavage of 5-oxoproline to form L-glutamate coupled to the hydrolysis of ATP to ADP and inorganic phosphate. The protein is 5-oxoprolinase subunit A of Escherichia coli (strain SE11).